The sequence spans 608 residues: 2',5'-phosphodiesterase 12 (608 aa).

Residues 1–16 (MWRLPGRSALRGVRSV) constitute a mitochondrion transit peptide. Basic residues predominate over residues 90–99 (AAKKSRKNRA). The segment at 90–111 (AAKKSRKNRAHSSGGAACEATG) is disordered. S216 is subject to Phosphoserine. E350, D495, and N497 together coordinate Mg(2+). Residue D495 is the Proton donor/acceptor of the active site.

The protein belongs to the CCR4/nocturin family. Mg(2+) serves as cofactor.

The protein localises to the mitochondrion matrix. The catalysed reaction is Exonucleolytic cleavage of poly(A) to 5'-AMP.. In terms of biological role, enzyme that cleaves 2',5'-phosphodiester bond linking adenosines of the 5'-triphosphorylated oligoadenylates, triphosphorylated oligoadenylates referred as 2-5A modulates the 2-5A system. Degrades triphosphorylated 2-5A to produce AMP and ATP. Also cleaves 3',5'-phosphodiester bond of oligoadenylates. Plays a role as a negative regulator of the 2-5A system that is one of the major pathways for antiviral and antitumor functions induced by interferons (IFNs). Suppression of this enzyme increases cellular 2-5A levels and decreases viral replication in cultured small-airway epithelial cells. The protein is 2',5'-phosphodiesterase 12 (Pde12) of Mus musculus (Mouse).